Consider the following 174-residue polypeptide: MGVASSKILENLMEGTNFDKEEIERLRKRFMKLDKDGSGTIDKNEFLTIPGISSNPLAARLMDVFDEDGNGTIDFQEFIMGLSAFSGKTSKLDKLKFAFKIYDIDRDGYIGNGELFIVMKMMVGKNLQDEELQQIVDKTMMEADEDGDGRLNFHEFKNAVDSKSVASALTLNMI.

EF-hand domains lie at 21–56 (EEIERLRKRFMKLDKDGSGTIDKNEFLTIPGISSNP), 60–88 (RLMDVFDEDGNGTIDFQEFIMGLSAFSGK), 90–125 (SKLDKLKFAFKIYDIDRDGYIGNGELFIVMKMMVGK), and 131–166 (ELQQIVDKTMMEADEDGDGRLNFHEFKNAVDSKSVA). 20 residues coordinate Ca(2+): Asp-34, Asp-36, Ser-38, Thr-40, Glu-45, Asp-66, Asp-68, Asn-70, Thr-72, Glu-77, Asp-103, Asp-105, Asp-107, Tyr-109, Glu-114, Asp-144, Asp-146, Asp-148, Arg-150, and Glu-155.

Belongs to the calcineurin regulatory subunit family. As to quaternary structure, composed of a catalytic subunit (A) and a regulatory subunit (B).

Its function is as follows. Regulatory subunit of calcineurin, a calcium-dependent, calmodulin stimulated protein phosphatase. Confers calcium sensitivity. The sequence is that of Calcineurin subunit B (CNB1) from Debaryomyces hansenii (strain ATCC 36239 / CBS 767 / BCRC 21394 / JCM 1990 / NBRC 0083 / IGC 2968) (Yeast).